Consider the following 156-residue polypeptide: Cyanate hydratase (156 aa).

Residues R96, E99, and S122 contribute to the active site.

This sequence belongs to the cyanase family.

The catalysed reaction is cyanate + hydrogencarbonate + 3 H(+) = NH4(+) + 2 CO2. In terms of biological role, catalyzes the reaction of cyanate with bicarbonate to produce ammonia and carbon dioxide. The protein is Cyanate hydratase of Pseudomonas entomophila (strain L48).